A 141-amino-acid polypeptide reads, in one-letter code: Cystatin (141 aa).

An N-terminal signal peptide occupies residues 1–26; sequence MVHSQLPVVALLRLLCALLLLPSATM. The region spanning 29–129 is the Cystatin domain; that stretch reads GGLSPRSVTD…CRFQVWSRPW (101 aa). A Secondary area of contact motif is present at residues 73–77; sequence QVVAG. 2 cysteine pairs are disulfide-bonded: Cys91-Cys107 and Cys120-Cys140.

The protein belongs to the cystatin family. As to expression, expressed at a low level by the venom gland (at protein level).

It is found in the secreted. Functionally, inhibits various C1 cysteine proteases including cathepsin L, papain and cathepsin B. This protein has no toxic activity and its function in the venom is unknown. It may play a role as a housekeeping or regulatory protein. The polypeptide is Cystatin (Notechis scutatus scutatus (Mainland tiger snake)).